The sequence spans 447 residues: Transcription factor azf1 (447 aa).

Disordered stretches follow at residues 125 to 155 (HNGA…NEVE) and 174 to 199 (QSPG…PQSY). Residues 127 to 139 (GASQQPPGAQSSS) are compositionally biased toward low complexity. Polar residues predominate over residues 140–155 (NEEGAQGKSSSSNEVE). C2H2-type zinc fingers lie at residues 225 to 249 (YACT…MRAH), 255 to 279 (FVCK…QRRH), 285 to 307 (FSCD…KITH), and 313 to 338 (FTCL…NKFH). The disordered stretch occupies residues 377 to 447 (NKGIKGRGKD…EPYFIERQAH (71 aa)). Residues 397 to 416 (PGSESRRRIEPLSSTDDKMR) are compositionally biased toward basic and acidic residues. Positions 421–431 (GDTSMYNGGSS) are enriched in polar residues.

The protein resides in the nucleus. Transcription factor that acts as a positive regulator of ochratoxin A (OTA) biosynthesis via controlling the expression of antioxidant genes and oxidative phosphorylation genes. The polypeptide is Transcription factor azf1 (Aspergillus niger (strain ATCC MYA-4892 / CBS 513.88 / FGSC A1513)).